A 64-amino-acid polypeptide reads, in one-letter code: Small ribosomal subunit protein bS21 (64 aa).

The protein belongs to the bacterial ribosomal protein bS21 family.

The polypeptide is Small ribosomal subunit protein bS21 (Anaeromyxobacter dehalogenans (strain 2CP-1 / ATCC BAA-258)).